A 377-amino-acid polypeptide reads, in one-letter code: Nitric oxide reductase FlRd-NAD(+) reductase (377 aa).

It belongs to the FAD-dependent oxidoreductase family. The cofactor is FAD.

It localises to the cytoplasm. It carries out the reaction 2 reduced [nitric oxide reductase rubredoxin domain] + NAD(+) + H(+) = 2 oxidized [nitric oxide reductase rubredoxin domain] + NADH. It functions in the pathway nitrogen metabolism; nitric oxide reduction. Functionally, one of at least two accessory proteins for anaerobic nitric oxide (NO) reductase. Reduces the rubredoxin moiety of NO reductase. In Escherichia fergusonii (strain ATCC 35469 / DSM 13698 / CCUG 18766 / IAM 14443 / JCM 21226 / LMG 7866 / NBRC 102419 / NCTC 12128 / CDC 0568-73), this protein is Nitric oxide reductase FlRd-NAD(+) reductase.